Here is a 353-residue protein sequence, read N- to C-terminus: Photosystem II protein D1 (353 aa).

Thr-2 bears the N-acetylthreonine mark. The residue at position 2 (Thr-2) is a Phosphothreonine. Helical transmembrane passes span 29 to 46 (YIGW…TATS), 118 to 133 (HFLL…EWEL), and 142 to 156 (WIAV…AATA). Chlorophyll a is bound at residue His-118. Tyr-126 is a pheophytin a binding site. Residues Asp-170 and Glu-189 each contribute to the [CaMn4O5] cluster site. A helical membrane pass occupies residues 197 to 218 (FHMLGVAGVFGGSLFSAMHGSL). Position 198 (His-198) interacts with chlorophyll a. A quinone-binding positions include His-215 and 264 to 265 (SF). Fe cation is bound at residue His-215. His-272 is a Fe cation binding site. The helical transmembrane segment at 274 to 288 (FLAAWPVVGIWFTAL) threads the bilayer. His-332, Glu-333, Asp-342, and Ala-344 together coordinate [CaMn4O5] cluster. Residues 345–353 (AVEANSIDG) constitute a propeptide that is removed on maturation.

This sequence belongs to the reaction center PufL/M/PsbA/D family. PSII is composed of 1 copy each of membrane proteins PsbA, PsbB, PsbC, PsbD, PsbE, PsbF, PsbH, PsbI, PsbJ, PsbK, PsbL, PsbM, PsbT, PsbX, PsbY, PsbZ, Psb30/Ycf12, at least 3 peripheral proteins of the oxygen-evolving complex and a large number of cofactors. It forms dimeric complexes. The cofactor is The D1/D2 heterodimer binds P680, chlorophylls that are the primary electron donor of PSII, and subsequent electron acceptors. It shares a non-heme iron and each subunit binds pheophytin, quinone, additional chlorophylls, carotenoids and lipids. D1 provides most of the ligands for the Mn4-Ca-O5 cluster of the oxygen-evolving complex (OEC). There is also a Cl(-1) ion associated with D1 and D2, which is required for oxygen evolution. The PSII complex binds additional chlorophylls, carotenoids and specific lipids.. Tyr-161 forms a radical intermediate that is referred to as redox-active TyrZ, YZ or Y-Z. Post-translationally, C-terminally processed by CTPA; processing is essential to allow assembly of the oxygen-evolving complex and thus photosynthetic growth.

It localises to the plastid. It is found in the chloroplast thylakoid membrane. The enzyme catalyses 2 a plastoquinone + 4 hnu + 2 H2O = 2 a plastoquinol + O2. In terms of biological role, photosystem II (PSII) is a light-driven water:plastoquinone oxidoreductase that uses light energy to abstract electrons from H(2)O, generating O(2) and a proton gradient subsequently used for ATP formation. It consists of a core antenna complex that captures photons, and an electron transfer chain that converts photonic excitation into a charge separation. The D1/D2 (PsbA/PsbD) reaction center heterodimer binds P680, the primary electron donor of PSII as well as several subsequent electron acceptors. This Cryptomeria japonica (Japanese cedar) protein is Photosystem II protein D1.